The sequence spans 425 residues: MLDLKRIRTDFDSVAEKLATRGVDAATLSQMKTIDKERRDLLVKVEELKAERNTVSAEIAQAKRNKENTDDKIAAMQKLSAEVKNLDASLAELDAKLTEFTTTLPNIPHDSVPVGADENENVEVRRWGTPHQFDFEAKAHWDLGEDLDILDWERGAKVTGARFLFYKGLGARLERAIYNFMLDEHGKEGYTEVITPYMVNHDSMFGTGQYPKFKEDTFELSDTNFVLIPTAEVPLTNYYRDEILDGKELPIYFTAMSPSFRSEAGSAGRDTRGLIRLHQFHKVEMVKFAKPEESYEELEKMTANAENILQKLNLPYRVVALCTGDMGFSAAKTYDLEVWIPAQNTYREISSCSNTEDFQARRAQIRYRDEADGKVKLLHTLNGSGLAVGRTVAAILENYQNEDGSVTIPEVLRPYMGGLEVIAPK.

An L-serine-binding site is contributed by 230–232; that stretch reads TAE. 261–263 contributes to the ATP binding site; sequence RSE. Glutamate 284 contacts L-serine. 348–351 provides a ligand contact to ATP; sequence EISS. Position 384 (serine 384) interacts with L-serine.

It belongs to the class-II aminoacyl-tRNA synthetase family. Type-1 seryl-tRNA synthetase subfamily. As to quaternary structure, homodimer. The tRNA molecule binds across the dimer.

It localises to the cytoplasm. It catalyses the reaction tRNA(Ser) + L-serine + ATP = L-seryl-tRNA(Ser) + AMP + diphosphate + H(+). It carries out the reaction tRNA(Sec) + L-serine + ATP = L-seryl-tRNA(Sec) + AMP + diphosphate + H(+). It functions in the pathway aminoacyl-tRNA biosynthesis; selenocysteinyl-tRNA(Sec) biosynthesis; L-seryl-tRNA(Sec) from L-serine and tRNA(Sec): step 1/1. Catalyzes the attachment of serine to tRNA(Ser). Is also able to aminoacylate tRNA(Sec) with serine, to form the misacylated tRNA L-seryl-tRNA(Sec), which will be further converted into selenocysteinyl-tRNA(Sec). This chain is Serine--tRNA ligase, found in Streptococcus sanguinis (strain SK36).